Consider the following 3412-residue polypeptide: Genome polyprotein (3412 aa).

The Cytoplasmic portion of the chain corresponds to 1–104; it reads MSGRKAQGKT…LSSRKRRSSE (104 aa). The hydrophobic; homodimerization of capsid protein C stretch occupies residues 38-72; the sequence is PGPSRGVQGFIFFFLFNILTGKKLTTHLKRLWRML. The propeptide at 102–121 is ER anchor for the capsid protein C, removed in mature form by serine protease NS3; that stretch reads SSEMTMMPLLILSMVILGGG. The chain crosses the membrane as a helical span at residues 105–125; the sequence is MTMMPLLILSMVILGGGVTLV. Topologically, residues 126 to 244 are extracellular; sequence RKNRWLLLNV…GERQLQKIER (119 aa). Residues Asn134 and Asn150 are each glycosylated (N-linked (GlcNAc...) asparagine; by host). A helical transmembrane segment spans residues 245-265; sequence WLVRNPFFAVTALAIAYLVGN. Residues 266–270 lie on the Cytoplasmic side of the membrane; sequence NKTQR. A helical transmembrane segment spans residues 271–285; sequence VVIALLVLAVGPAYS. Over 286-730 the chain is Extracellular; the sequence is AHCIGITDRD…TVFGSAFQGL (445 aa). Disulfide bonds link Cys288–Cys315, Cys345–Cys401, Cys345–Cys406, Cys359–Cys390, Cys377–Cys401, Cys377–Cys406, Cys467–Cys568, and Cys585–Cys615. The tract at residues 383–396 is fusion peptide; it reads DRGWGNGCGLFGKG. The chain crosses the membrane as a helical span at residues 731–751; it reads FGGLSWITKVIMGAVLIWVGI. Residues 752–757 lie on the Extracellular side of the membrane; that stretch reads NTRNMT. The chain crosses the membrane as a helical span at residues 758-778; that stretch reads MSMSMILVGVIMMFLSLGVGA. Topologically, residues 779 to 1132 are extracellular; sequence DQGCAVNFGK…LVRSWVTAGE (354 aa). 6 disulfide bridges follow: Cys782–Cys793, Cys833–Cys921, Cys957–Cys1002, Cys1058–Cys1107, Cys1069–Cys1091, and Cys1090–Cys1094. Residues Asn908 and Asn986 are each glycosylated (N-linked (GlcNAc...) asparagine; by host). A helical transmembrane segment spans residues 1133-1153; it reads VHAVPFGLVSMMIAMEVVLRK. Topologically, residues 1154–1201 are cytoplasmic; that stretch reads RQGPKQMLVGGIILLGAMLVGQVTMLDLVKLIVAVGLHFHEINNGGDA. A helical membrane pass occupies residues 1202–1222; it reads MYMALIASFSIRPGLLIGFGL. Residues 1223–1287 lie on the Lumenal side of the membrane; that stretch reads RTLWSPRERL…ILPLMALLTP (65 aa). Residues 1288 to 1308 traverse the membrane as a helical segment; sequence VTMYEVRMATMLFCTVVIVGV. At 1309 to 1355 the chain is on the cytoplasmic side; it reads LHQNSKDTSMQKTIPIVALTLTSYMGLTQPFLGLCAYMSTQVFGRRS. A helical transmembrane segment spans residues 1356–1376; sequence IPVNEALAAAGLVGVLAGLAF. Residues 1377–1378 lie on the Lumenal side of the membrane; sequence QD. A helical membrane pass occupies residues 1379-1399; it reads MENFLGPIAVGGILMMLVSVA. Topologically, residues 1400-1456 are cytoplasmic; it reads GKVDGLELKKLGEVSWEEEAEISGSSSRYDVALSEQGEFKLLSEDKVPWDQIVMTSL. The tract at residues 1407–1446 is interacts with and activates NS3 protease; that stretch reads LKKLGEVSWEEEAEISGSSSRYDVALSEQGEFKLLSEDKV. Residues 1457–1477 constitute an intramembrane region (helical); the sequence is ALVGAAIHPFALLLVLGGWVL. Residues 1478-2157 lie on the Cytoplasmic side of the membrane; that stretch reads HIKGARRSGD…RNALSMMPEA (680 aa). The Peptidase S7 domain maps to 1485–1665; sequence SGDVLWDIPT…EVKEESKEEL (181 aa). Residues His1537, Asp1561, and Ser1622 each act as charge relay system; for serine protease NS3 activity in the active site. Positions 1669–1825 constitute a Helicase ATP-binding domain; the sequence is PTMLKKGMTT…HSNGEIEDVQ (157 aa). An important for RNA-binding region spans residues 1673-1676; the sequence is KKGM. 1682–1689 lines the ATP pocket; that stretch reads FHPGAGKT. The DEAH box motif lies at 1773 to 1776; that stretch reads DEAH. The region spanning 1820-1997 is the Helicase C-terminal domain; that stretch reads EIEDVQTDIP…VRGGMVAPLY (178 aa). Lys1877 bears the N6-acetyllysine; by host mark. The segment at 1942–1961 is disordered; it reads AAQRRGRIGRNPNRDGDSYY. A helical membrane pass occupies residues 2158–2178; that stretch reads MTIVMLFILAGLLTSGMVIFF. The Lumenal portion of the chain corresponds to 2179–2186; that stretch reads MSPKGMSR. Residues 2187–2207 constitute an intramembrane region (helical); it reads MSMAMGTMAGSGYLMFLGGVK. Topologically, residues 2208–2209 are lumenal; the sequence is PT. Residues 2210-2230 traverse the membrane as a helical segment; that stretch reads HISYVMLIFFVLMVVIIPEPG. Residues 2231–2241 are Cytoplasmic-facing; the sequence is QQRSIQDNQVA. Residues 2242 to 2262 traverse the membrane as a helical segment; that stretch reads YLIIGILTLLSVVAANELGML. Residues 2263–2293 are Lumenal-facing; sequence EKTKEDFFGKRNIATSGGTIPWSWPDLDLKP. The segment at residues 2294–2314 is an intramembrane region (helical); sequence GAAWTVYVGIVTMLSPMLHHW. Topologically, residues 2315–2360 are lumenal; sequence IKVEYGNLSLSGIAQSASVLSFMDKGVPFMKMNISVVILLVSGWNS. The helical transmembrane segment at 2361–2380 threads the bilayer; the sequence is ITVIPLLCGVGGAMLHWTLI. Topologically, residues 2381–2421 are cytoplasmic; it reads LPGIKAQQSKLAQKRVFHGVAKNPVVDGNPTADIEEAPEMP. Residues 2422–2442 form a helical membrane-spanning segment; it reads ALYEKKLALYLLLALSLMSVA. Residues 2443–2445 are Lumenal-facing; sequence MCR. Residues 2446 to 2466 traverse the membrane as a helical segment; that stretch reads TPFSLAEGIVLSSAALGPLIE. Over 2467 to 3411 the chain is Cytoplasmic; the sequence is GNTSLLWNGP…VDADLQPGEL (945 aa). The 265-residue stretch at 2508–2772 folds into the mRNA cap 0-1 NS5-type MT domain; it reads GSANGKTLGE…DVILPIGTRS (265 aa). Ser2563 is an S-adenosyl-L-methionine binding site. A Phosphoserine modification is found at Ser2563. The For 2'-O-MTase activity role is filled by Lys2568. Gly2593, Trp2594, Thr2611, Leu2612, Asp2638, and Ile2639 together coordinate S-adenosyl-L-methionine. The For 2'-O-MTase activity role is filled by Asp2653. Position 2654 (Ile2654) interacts with S-adenosyl-L-methionine. Catalysis depends on for 2'-O-MTase activity residues Lys2689 and Glu2725. Tyr2727 contributes to the S-adenosyl-L-methionine binding site. The Nuclear localization signal signature appears at 2879 to 2912; that stretch reads RKIMRVVNRWLFRHLAREKKPRLCTKEEFIAKVR. Glu2946, His2950, Cys2955, and Cys2958 together coordinate Zn(2+). Positions 3036-3188 constitute a RdRp catalytic domain; the sequence is GGFYADDTAG…KPVDDRFGLA (153 aa). Zn(2+)-binding residues include His3223, Cys3239, and Cys3358.

In the N-terminal section; belongs to the class I-like SAM-binding methyltransferase superfamily. mRNA cap 0-1 NS5-type methyltransferase family. As to quaternary structure, homodimer. Interacts (via N-terminus) with host EXOC1 (via C-terminus); this interaction results in EXOC1 degradation through the proteasome degradation pathway. Forms heterodimers with envelope protein E in the endoplasmic reticulum and Golgi. In terms of assembly, homodimer; in the endoplasmic reticulum and Golgi. Interacts with protein prM. Interacts with non-structural protein 1. As to quaternary structure, homodimer; Homohexamer when secreted. Interacts with envelope protein E. Interacts (via N-terminus) with serine protease NS3. In terms of assembly, forms a heterodimer with serine protease NS3. May form homooligomers. As to quaternary structure, forms a heterodimer with NS2B. Interacts with non-structural protein 2A (via N-terminus). Interacts with NS4B. Interacts with unphosphorylated RNA-directed RNA polymerase NS5; this interaction stimulates RNA-directed RNA polymerase NS5 guanylyltransferase activity. NS3 interacts with host PDCD6IP; this interaction contributes to virion release. Interacts with serine protease NS3. In terms of assembly, homodimer. Interacts with host STAT2; this interaction prevents the establishment of cellular antiviral state. Interacts with serine protease NS3. Interacts with host TRIM23; this interaction leads to NS5 ubiquitination. In terms of processing, specific enzymatic cleavages in vivo yield mature proteins. The nascent capsid protein C contains a C-terminal hydrophobic domain that act as a signal sequence for translocation of prM into the lumen of the ER. Mature capsid protein C is cleaved at a site upstream of this hydrophobic domain by NS3. prM is cleaved in post-Golgi vesicles by a host furin, releasing the mature small envelope protein M, and peptide pr. Non-structural protein 2A-alpha, a C-terminally truncated form of non-structural protein 2A, results from partial cleavage by NS3. Specific enzymatic cleavages in vivo yield mature proteins peptide 2K acts as a signal sequence and is removed from the N-terminus of NS4B by the host signal peptidase in the ER lumen. Signal cleavage at the 2K-4B site requires a prior NS3 protease-mediated cleavage at the 4A-2K site. Post-translationally, cleaved in post-Golgi vesicles by a host furin, releasing the mature small envelope protein M, and peptide pr. This cleavage is incomplete as up to 30% of viral particles still carry uncleaved prM. N-glycosylated. In terms of processing, N-glycosylated. The excreted form is glycosylated and this is required for efficient secretion of the protein from infected cells. Post-translationally, polyubiquitinated; ubiquitination is probably mediated by host TRIM23 and is prerequisite for NS5-STAT2 interaction. NS5 is not ISGylated or sumoylated. Acetylated by host KAT5. Acetylation modulates NS3 RNA-binding and unwinding activities and plays an important positive role for viral replication. In terms of processing, phosphorylated on serines residues. This phosphorylation may trigger NS5 nuclear localization.

Its subcellular location is the virion. It localises to the host nucleus. It is found in the host cytoplasm. The protein localises to the host perinuclear region. The protein resides in the secreted. Its subcellular location is the virion membrane. It localises to the host endoplasmic reticulum membrane. The enzyme catalyses Selective hydrolysis of -Xaa-Xaa-|-Yaa- bonds in which each of the Xaa can be either Arg or Lys and Yaa can be either Ser or Ala.. It catalyses the reaction RNA(n) + a ribonucleoside 5'-triphosphate = RNA(n+1) + diphosphate. It carries out the reaction a ribonucleoside 5'-triphosphate + H2O = a ribonucleoside 5'-diphosphate + phosphate + H(+). The catalysed reaction is ATP + H2O = ADP + phosphate + H(+). The enzyme catalyses a 5'-end (5'-triphosphoguanosine)-ribonucleoside in mRNA + S-adenosyl-L-methionine = a 5'-end (N(7)-methyl 5'-triphosphoguanosine)-ribonucleoside in mRNA + S-adenosyl-L-homocysteine. It catalyses the reaction a 5'-end (N(7)-methyl 5'-triphosphoguanosine)-ribonucleoside in mRNA + S-adenosyl-L-methionine = a 5'-end (N(7)-methyl 5'-triphosphoguanosine)-(2'-O-methyl-ribonucleoside) in mRNA + S-adenosyl-L-homocysteine + H(+). Functionally, plays a role in virus budding by binding to the cell membrane and gathering the viral RNA into a nucleocapsid that forms the core of a mature virus particle. During virus entry, may induce genome penetration into the host cytoplasm after hemifusion induced by the surface proteins. Can migrate to the cell nucleus where it modulates host functions. Its function is as follows. Inhibits RNA silencing by interfering with host Dicer. Prevents premature fusion activity of envelope proteins in trans-Golgi by binding to envelope protein E at pH6.0. After virion release in extracellular space, gets dissociated from E dimers. In terms of biological role, acts as a chaperone for envelope protein E during intracellular virion assembly by masking and inactivating envelope protein E fusion peptide. prM is the only viral peptide matured by host furin in the trans-Golgi network probably to avoid catastrophic activation of the viral fusion activity in acidic Golgi compartment prior to virion release. prM-E cleavage is inefficient, and many virions are only partially matured. These uncleaved prM would play a role in immune evasion. Functionally, may play a role in virus budding. Exerts cytotoxic effects by activating a mitochondrial apoptotic pathway through M ectodomain. May display a viroporin activity. Its function is as follows. Binds to host cell surface receptor and mediates fusion between viral and cellular membranes. Envelope protein is synthesized in the endoplasmic reticulum in the form of heterodimer with protein prM. They play a role in virion budding in the ER, and the newly formed immature particle is covered with 60 spikes composed of heterodimer between precursor prM and envelope protein E. The virion is transported to the Golgi apparatus where the low pH causes dissociation of PrM-E heterodimers and formation of E homodimers. prM-E cleavage is inefficient, and many virions are only partially matured. These uncleaved prM would play a role in immune evasion. Involved in immune evasion, pathogenesis and viral replication. Once cleaved off the polyprotein, is targeted to three destinations: the viral replication cycle, the plasma membrane and the extracellular compartment. Essential for viral replication. Required for formation of the replication complex and recruitment of other non-structural proteins to the ER-derived membrane structures. Excreted as a hexameric lipoparticle that plays a role against host immune response. Antagonizing the complement function. Binds to the host macrophages and dendritic cells. Inhibits signal transduction originating from Toll-like receptor 3 (TLR3). In terms of biological role, component of the viral RNA replication complex that functions in virion assembly and antagonizes the host immune response. Functionally, required cofactor for the serine protease function of NS3. May have membrane-destabilizing activity and form viroporins. Its function is as follows. Displays three enzymatic activities: serine protease, NTPase and RNA helicase. NS3 serine protease, in association with NS2B, performs its autocleavage and cleaves the polyprotein at dibasic sites in the cytoplasm: C-prM, NS2A-NS2B, NS2B-NS3, NS3-NS4A, NS4A-2K and NS4B-NS5. NS3 RNA helicase binds RNA and unwinds dsRNA in the 3' to 5' direction. Also plays a role in virus assembly. Regulates the ATPase activity of the NS3 helicase activity. NS4A allows NS3 helicase to conserve energy during unwinding. In terms of biological role, functions as a signal peptide for NS4B and is required for the interferon antagonism activity of the latter. Functionally, induces the formation of ER-derived membrane vesicles where the viral replication takes place. Inhibits interferon (IFN)-induced host STAT1 phosphorylation and nuclear translocation, thereby preventing the establishment of cellular antiviral state by blocking the IFN-alpha/beta pathway. Its function is as follows. Replicates the viral (+) and (-) RNA genome, and performs the capping of genomes in the cytoplasm. NS5 methylates viral RNA cap at guanine N-7 and ribose 2'-O positions. Besides its role in RNA genome replication, also prevents the establishment of cellular antiviral state by blocking the interferon-alpha/beta (IFN-alpha/beta) signaling pathway. IFN-I induces binding of NS5 to host IFN-activated transcription factor STAT2, preventing its transcriptional activity. Host TRIM23 is the E3 ligase that interacts with and polyubiquitinates NS5 to promote its binding to STAT2 and trigger IFN-I signaling inhibition. The sequence is that of Genome polyprotein from Yellow fever virus (isolate Uganda/A7094A4/1948) (YFV).